We begin with the raw amino-acid sequence, 370 residues long: 4-hydroxy-3-methylbut-2-en-1-yl diphosphate synthase (flavodoxin) (370 aa).

Cys270, Cys273, Cys305, and Glu312 together coordinate [4Fe-4S] cluster.

Belongs to the IspG family. [4Fe-4S] cluster is required as a cofactor.

It carries out the reaction (2E)-4-hydroxy-3-methylbut-2-enyl diphosphate + oxidized [flavodoxin] + H2O + 2 H(+) = 2-C-methyl-D-erythritol 2,4-cyclic diphosphate + reduced [flavodoxin]. The protein operates within isoprenoid biosynthesis; isopentenyl diphosphate biosynthesis via DXP pathway; isopentenyl diphosphate from 1-deoxy-D-xylulose 5-phosphate: step 5/6. Its function is as follows. Converts 2C-methyl-D-erythritol 2,4-cyclodiphosphate (ME-2,4cPP) into 1-hydroxy-2-methyl-2-(E)-butenyl 4-diphosphate. This chain is 4-hydroxy-3-methylbut-2-en-1-yl diphosphate synthase (flavodoxin), found in Hahella chejuensis (strain KCTC 2396).